The primary structure comprises 189 residues: MAQEKRGSRDDRQNREERDSEFVDKLVAINRVAKVVKGGRRFGFAALVVVGDQKGRVGFGHGKAREVPEAIRKATESAKRDLIFVPLRDGRTLHHDVHGRHGAGKVLLRSAKAGTGIIAGGPMRAVFETLGMHDVVAKSTGSSNPYNMVRATFDALKHQVHPKDVAAQRGLKYATLQARRAASGNGSEE.

Residues 22-85 (FVDKLVAINR…ESAKRDLIFV (64 aa)) form the S5 DRBM domain.

Belongs to the universal ribosomal protein uS5 family. As to quaternary structure, part of the 30S ribosomal subunit. Contacts proteins S4 and S8.

Its function is as follows. With S4 and S12 plays an important role in translational accuracy. In terms of biological role, located at the back of the 30S subunit body where it stabilizes the conformation of the head with respect to the body. In Allorhizobium ampelinum (strain ATCC BAA-846 / DSM 112012 / S4) (Agrobacterium vitis (strain S4)), this protein is Small ribosomal subunit protein uS5.